We begin with the raw amino-acid sequence, 525 residues long: Bifunctional purine biosynthesis protein PurH (525 aa).

The MGS-like domain maps to 1–149; it reads MSDPVIKRAL…KNHESVTVIT (149 aa).

It belongs to the PurH family.

The catalysed reaction is (6R)-10-formyltetrahydrofolate + 5-amino-1-(5-phospho-beta-D-ribosyl)imidazole-4-carboxamide = 5-formamido-1-(5-phospho-D-ribosyl)imidazole-4-carboxamide + (6S)-5,6,7,8-tetrahydrofolate. It carries out the reaction IMP + H2O = 5-formamido-1-(5-phospho-D-ribosyl)imidazole-4-carboxamide. Its pathway is purine metabolism; IMP biosynthesis via de novo pathway; 5-formamido-1-(5-phospho-D-ribosyl)imidazole-4-carboxamide from 5-amino-1-(5-phospho-D-ribosyl)imidazole-4-carboxamide (10-formyl THF route): step 1/1. The protein operates within purine metabolism; IMP biosynthesis via de novo pathway; IMP from 5-formamido-1-(5-phospho-D-ribosyl)imidazole-4-carboxamide: step 1/1. This is Bifunctional purine biosynthesis protein PurH from Chlorobium phaeobacteroides (strain BS1).